The sequence spans 321 residues: 2,3,4,5-tetrahydropyridine-2,6-dicarboxylate N-succinyltransferase (321 aa).

Asp166 and Glu183 together coordinate Mg(2+). Residue Glu199 is the Acyl-anhydride intermediate of the active site. Residues Arg201, Gly216, Ser219, Ala242, Glu257–Ala258, Gly265, Lys281, and Arg294–Ser297 each bind succinyl-CoA.

This sequence belongs to the type 2 tetrahydrodipicolinate N-succinyltransferase family. Homotrimer.

Its subcellular location is the cytoplasm. The enzyme catalyses (S)-2,3,4,5-tetrahydrodipicolinate + succinyl-CoA + H2O = (S)-2-succinylamino-6-oxoheptanedioate + CoA. It participates in amino-acid biosynthesis; L-lysine biosynthesis via DAP pathway; LL-2,6-diaminopimelate from (S)-tetrahydrodipicolinate (succinylase route): step 1/3. Its function is as follows. Catalyzes the conversion of the cyclic tetrahydrodipicolinate (THDP) into the acyclic N-succinyl-L-2-amino-6-oxopimelate using succinyl-CoA. This is 2,3,4,5-tetrahydropyridine-2,6-dicarboxylate N-succinyltransferase from Rothia mucilaginosa (strain DY-18) (Stomatococcus mucilaginosus).